A 308-amino-acid chain; its full sequence is Cytochrome b (308 aa).

Helical transmembrane passes span 1-21, 45-66, 81-101, and 146-166; these read FGSL…LMAM, WLIR…YLHI, WNTG…GYVL, and FFAL…IHLT. Heme b contacts are provided by histidine 51 and histidine 65. The heme b site is built by histidine 150 and histidine 164. An a ubiquinone-binding site is contributed by histidine 169. Helical transmembrane passes span 194–214, 256–276, and 288–308; these read TKDI…AMFS, LGGV…PFLH, and LSQL…WVGS.

It belongs to the cytochrome b family. The cytochrome bc1 complex contains 11 subunits: 3 respiratory subunits (MT-CYB, CYC1 and UQCRFS1), 2 core proteins (UQCRC1 and UQCRC2) and 6 low-molecular weight proteins (UQCRH/QCR6, UQCRB/QCR7, UQCRQ/QCR8, UQCR10/QCR9, UQCR11/QCR10 and a cleavage product of UQCRFS1). This cytochrome bc1 complex then forms a dimer. Heme b is required as a cofactor.

Its subcellular location is the mitochondrion inner membrane. Functionally, component of the ubiquinol-cytochrome c reductase complex (complex III or cytochrome b-c1 complex) that is part of the mitochondrial respiratory chain. The b-c1 complex mediates electron transfer from ubiquinol to cytochrome c. Contributes to the generation of a proton gradient across the mitochondrial membrane that is then used for ATP synthesis. The chain is Cytochrome b (MT-CYB) from Asthenes dorbignyi (Creamy-breasted canastero).